The following is a 507-amino-acid chain: ATP synthase subunit alpha, mitochondrial (507 aa).

171–178 (GDRQTGKT) contacts ATP.

Belongs to the ATPase alpha/beta chains family. In terms of assembly, F-type ATPases have 2 components, CF(1) - the catalytic core - and CF(0) - the membrane proton channel. CF(1) has five subunits: alpha(3), beta(3), gamma(1), delta(1), epsilon(1). CF(0) has three main subunits: a, b and c.

It localises to the mitochondrion. The protein localises to the mitochondrion inner membrane. Its function is as follows. Mitochondrial membrane ATP synthase (F(1)F(0) ATP synthase or Complex V) produces ATP from ADP in the presence of a proton gradient across the membrane which is generated by electron transport complexes of the respiratory chain. F-type ATPases consist of two structural domains, F(1) - containing the extramembraneous catalytic core, and F(0) - containing the membrane proton channel, linked together by a central stalk and a peripheral stalk. During catalysis, ATP synthesis in the catalytic domain of F(1) is coupled via a rotary mechanism of the central stalk subunits to proton translocation. Subunits alpha and beta form the catalytic core in F(1). Rotation of the central stalk against the surrounding alpha(3)beta(3) subunits leads to hydrolysis of ATP in three separate catalytic sites on the beta subunits. Subunit alpha does not bear the catalytic high-affinity ATP-binding sites. The chain is ATP synthase subunit alpha, mitochondrial (ATPA) from Pisum sativum (Garden pea).